Consider the following 118-residue polypeptide: BolA-like protein 3 (118 aa).

The protein belongs to the BolA/IbaG family. As to quaternary structure, interacts with NFU1.

Its subcellular location is the mitochondrion matrix. Functionally, acts as a mitochondrial iron-sulfur (Fe-S) cluster assembly factor that facilitates [4Fe-4S] cluster insertion into a subset of mitochondrial proteins such as lipoyl synthase (LS) and succinate dehydrogenase (SDH). Required during the last step of iron-sulfur protein assembly when the iron-sulfur cluster is inserted into the target protein. Acts together with NFU1, later than BOL1 and GRX5 in the [4Fe-4S] cluster insertion process. Not required for [2Fe-2S] cluster insertion into mitochondrial proteins. The protein is BolA-like protein 3 of Saccharomyces cerevisiae (strain ATCC 204508 / S288c) (Baker's yeast).